A 103-amino-acid chain; its full sequence is Histone H4 (103 aa).

Positions 1 to 14 (MSGRGKGGKGLGKG) are enriched in gly residues. The disordered stretch occupies residues 1-20 (MSGRGKGGKGLGKGGAKRHR). Lysine 6 carries the post-translational modification N6-acetyl-N6-methyllysine; alternate. N6-acetyllysine; alternate occurs at positions 6, 9, and 13. Lysine 6, lysine 9, and lysine 13 each carry N6-methyllysine; alternate. 2 positions are modified to N6-butyryllysine; alternate: lysine 9 and lysine 13. Lysine 13 is subject to N6-acetyl-N6-methyllysine; alternate. Position 17 is an N6-acetyllysine (lysine 17). Residues 17-21 (KRHRK) mediate DNA binding. Lysine 32 carries the post-translational modification N6-succinyllysine. Arginine 56 carries the post-translational modification Omega-N-methylarginine. 2 positions are modified to phosphoserine: serine 61 and serine 65. An N6-succinyllysine modification is found at lysine 78. At lysine 80 the chain carries N6-acetyllysine. Lysine 92 is modified (N6-glutaryllysine).

It belongs to the histone H4 family. In terms of assembly, the nucleosome is a histone octamer containing two molecules each of H2A, H2B, H3 and H4 assembled in one H3-H4 heterotetramer and two H2A-H2B heterodimers. The octamer wraps approximately 147 bp of DNA. Histone H4 is a component of the UAF (upstream activation factor) complex which consists of UAF30, RRN5, RRN9, RRN10, and histones H3 and H4. Post-translationally, glutarylation at Lys-92 (H4K91glu) destabilizes nucleosomes by promoting dissociation of the H2A-H2B dimers from nucleosomes.

The protein resides in the nucleus. It is found in the chromosome. Core component of nucleosome. Nucleosomes wrap and compact DNA into chromatin, limiting DNA accessibility to the cellular machineries which require DNA as a template. Histones thereby play a central role in transcription regulation, DNA repair, DNA replication and chromosomal stability. DNA accessibility is regulated via a complex set of post-translational modifications of histones, also called histone code, and nucleosome remodeling. Component of the UAF (upstream activation factor) complex which interacts with the upstream element of the RNA polymerase I promoter and forms a stable preinitiation complex. Together with SPT15/TBP UAF seems to stimulate basal transcription to a fully activated level. This is Histone H4 (HHF1) from Saccharomyces cerevisiae (strain ATCC 204508 / S288c) (Baker's yeast).